Reading from the N-terminus, the 217-residue chain is Guanylate kinase (217 aa).

Residues Met-1–Ser-10 show a composition bias toward low complexity. Residues Met-1 to Gly-30 are disordered. A Guanylate kinase-like domain is found at Gly-30–Tyr-208. ATP is bound at residue Gly-37–Gly-44.

It belongs to the guanylate kinase family.

The protein localises to the cytoplasm. The enzyme catalyses GMP + ATP = GDP + ADP. It catalyses the reaction dZMP + ATP = dZDP + ADP. It participates in purine metabolism. Essential for recycling GMP and indirectly, cGMP. Its function is as follows. (Microbial infection) Catalyzes the phosphorylation of dZMP to dZDP, when the bacterium is infected by a phage that produces the substrate for the synthesis of dZTP (2- amino-2'-deoxyadenosine 5'-triphosphate), which is then used by the phage as a DNA polymerase substrate. This is Guanylate kinase from Synechococcus sp. (strain JA-3-3Ab) (Cyanobacteria bacterium Yellowstone A-Prime).